Reading from the N-terminus, the 382-residue chain is Dual-specificity RNA methyltransferase RlmN (382 aa).

Glu-95 (proton acceptor) is an active-site residue. In terms of domain architecture, Radical SAM core spans Glu-101–Asp-347. Residues Cys-108 and Cys-352 are joined by a disulfide bond. Cys-115, Cys-119, and Cys-122 together coordinate [4Fe-4S] cluster. S-adenosyl-L-methionine is bound by residues Gly-178–Glu-179, Ser-210, Ser-232–His-234, and Asn-309. The active-site S-methylcysteine intermediate is Cys-352.

Belongs to the radical SAM superfamily. RlmN family. [4Fe-4S] cluster is required as a cofactor.

It is found in the cytoplasm. It catalyses the reaction adenosine(2503) in 23S rRNA + 2 reduced [2Fe-2S]-[ferredoxin] + 2 S-adenosyl-L-methionine = 2-methyladenosine(2503) in 23S rRNA + 5'-deoxyadenosine + L-methionine + 2 oxidized [2Fe-2S]-[ferredoxin] + S-adenosyl-L-homocysteine. The catalysed reaction is adenosine(37) in tRNA + 2 reduced [2Fe-2S]-[ferredoxin] + 2 S-adenosyl-L-methionine = 2-methyladenosine(37) in tRNA + 5'-deoxyadenosine + L-methionine + 2 oxidized [2Fe-2S]-[ferredoxin] + S-adenosyl-L-homocysteine. Its function is as follows. Specifically methylates position 2 of adenine 2503 in 23S rRNA and position 2 of adenine 37 in tRNAs. m2A2503 modification seems to play a crucial role in the proofreading step occurring at the peptidyl transferase center and thus would serve to optimize ribosomal fidelity. The chain is Dual-specificity RNA methyltransferase RlmN from Bordetella avium (strain 197N).